The sequence spans 1206 residues: Methionine synthase (1206 aa).

The region spanning 1–314 (MRVTAANQHQ…DHIREVAAAV (314 aa)) is the Hcy-binding domain. Residues Cys-233, Cys-299, and Cys-300 each contribute to the Zn(2+) site. Residues 350–609 (VLMIGERTNA…IPEEQRQAAL (260 aa)) form the Pterin-binding domain. The 94-residue stretch at 642-735 (REAELAKLPL…HMEKSDCDFG (94 aa)) folds into the B12-binding N-terminal domain. Residues 740–877 (KGRIVLATVK…SAKRGEALAP (138 aa)) enclose the B12-binding domain. Residues 750 to 754 (GDVHD), His-753, Ser-798, and Ala-856 each bind methylcob(III)alamin. The segment at 873–925 (EALAPGSPESLAAEADRNKETERKARHERSKRIAVQRKAAEEPVEVPERSDVP) is disordered. Positions 886–897 (EADRNKETERKA) are enriched in basic and acidic residues. Residues 898-907 (RHERSKRIAV) are compositionally biased toward basic residues. Residues 907 to 1206 (VQRKAAEEPV…HHPAAKYFNV (300 aa)) enclose the AdoMet activation domain. Positions 910–924 (KAAEEPVEVPERSDV) are enriched in basic and acidic residues. Residues Asp-954, Arg-1149, and 1203 to 1204 (YF) each bind S-adenosyl-L-methionine.

The protein belongs to the vitamin-B12 dependent methionine synthase family. Methylcob(III)alamin serves as cofactor. It depends on Zn(2+) as a cofactor.

It carries out the reaction (6S)-5-methyl-5,6,7,8-tetrahydrofolate + L-homocysteine = (6S)-5,6,7,8-tetrahydrofolate + L-methionine. Its pathway is amino-acid biosynthesis; L-methionine biosynthesis via de novo pathway; L-methionine from L-homocysteine (MetH route): step 1/1. In terms of biological role, catalyzes the transfer of a methyl group from methyl-cobalamin to homocysteine, yielding enzyme-bound cob(I)alamin and methionine. Subsequently, remethylates the cofactor using methyltetrahydrofolate. This is Methionine synthase (metH) from Mycobacterium leprae (strain TN).